Consider the following 336-residue polypeptide: Coproporphyrin III ferrochelatase (336 aa).

Fe-coproporphyrin III-binding residues include Ser-52 and Tyr-116. Fe(2+)-binding residues include His-172 and Glu-255.

This sequence belongs to the ferrochelatase family.

Its subcellular location is the cytoplasm. It carries out the reaction Fe-coproporphyrin III + 2 H(+) = coproporphyrin III + Fe(2+). The protein operates within porphyrin-containing compound metabolism; protoheme biosynthesis. Involved in coproporphyrin-dependent heme b biosynthesis. Catalyzes the insertion of ferrous iron into coproporphyrin III to form Fe-coproporphyrin III. The sequence is that of Coproporphyrin III ferrochelatase from Mycolicibacterium paratuberculosis (strain ATCC BAA-968 / K-10) (Mycobacterium paratuberculosis).